The following is a 479-amino-acid chain: Ammonium transporter Rh type C (479 aa).

Over 1–9 the chain is Cytoplasmic; that stretch reads MAWNTNLRW. Residues 10–30 form a helical membrane-spanning segment; that stretch reads RLPLTCLLLQVAMVILFGVFV. Residues 31–60 lie on the Extracellular side of the membrane; the sequence is RYDFDADAHWWTERKHKNLSEVENEFYYRY. The N-linked (GlcNAc...) asparagine glycan is linked to Asn-48. Residues 61–81 form a helical membrane-spanning segment; sequence PSFQDVHVMVFVGFGFLMTFL. Topologically, residues 82-85 are cytoplasmic; it reads QRYG. The helical transmembrane segment at 86-106 threads the bilayer; sequence FSAVGFNFLLAAFGIQWALLM. The Extracellular segment spans residues 107-123; that stretch reads QGWFHFLEGRYIVVGVE. Residues 124–144 traverse the membrane as a helical segment; the sequence is NLINADFCVASVCVAFGAVLG. Residues 145–148 lie on the Cytoplasmic side of the membrane; that stretch reads KVSP. The chain crosses the membrane as a helical span at residues 149-169; the sequence is IQLLIMTFFQVTLFAVNEFIL. The Extracellular segment spans residues 170–177; sequence LNLLKVKD. A helical membrane pass occupies residues 178–200; it reads AGGSMTIHTFYAYFELTVTRILY. The Cytoplasmic segment spans residues 201-218; sequence RRNLEQSKERQSSAYQSD. Residues 219–239 form a helical membrane-spanning segment; it reads LFAMIGTLFLWMYWPSFNSAI. The Extracellular segment spans residues 240-250; that stretch reads SYHGDSQHRAA. Residues 251-271 form a helical membrane-spanning segment; sequence INTYCSLAACVLTSVAVSSAL. The Cytoplasmic portion of the chain corresponds to 272–281; it reads HKKGKLDMVH. A helical membrane pass occupies residues 282-302; it reads IQNATLAGGVAVGTTAEMMLM. Pro-303 is a topological domain (extracellular). A helical membrane pass occupies residues 304 to 324; sequence YGALIIGFICGIISTLGFVYL. At 325–345 the chain is on the cytoplasmic side; sequence TPFLESRLHIQDTCGINNLHG. Residues 346–366 traverse the membrane as a helical segment; the sequence is IPGIIGGIVGAVTAASASLEV. The Extracellular portion of the chain corresponds to 367-394; sequence YGKEGLVHSFDFQDFKRDWTARTQGKFQ. Residues 395 to 415 form a helical membrane-spanning segment; the sequence is IYGLLVTLAMALMGGIIVGLI. Residues 416-479 lie on the Cytoplasmic side of the membrane; it reads LRLPFWGQPS…PMASSVPLVP (64 aa).

It belongs to the ammonium transporter (TC 2.A.49) family. Rh subfamily. As to quaternary structure, homotrimer. Post-translationally, N-glycosylated.

Its subcellular location is the apical cell membrane. It carries out the reaction NH4(+)(in) = NH4(+)(out). The catalysed reaction is methylamine(out) = methylamine(in). The enzyme catalyses CO2(out) = CO2(in). Its function is as follows. Ammonium transporter involved in the maintenance of acid-base homeostasis. Transports ammonium and its related derivative methylammonium across the plasma membrane of epithelial cells likely contributing to renal transepithelial ammonia transport and ammonia metabolism. Postulated to primarily mediate an electroneutral bidirectional transport of NH3 ammonia species according to a mechanism that implies interaction of an NH4(+) ion with acidic residues of the pore entry followed by dissociation of NH4(+) into NH3 and H(+). As a result NH3 transits through the central pore and is protonated on the extracellular side reforming NH4(+). May act as a CO2 channel providing for renal acid secretion. The protein is Ammonium transporter Rh type C (RHCG) of Macaca mulatta (Rhesus macaque).